Consider the following 498-residue polypeptide: Tumor necrosis factor receptor superfamily member 8 (498 aa).

The first 18 residues, Met-1–Ala-18, serve as a signal peptide directing secretion. Topologically, residues Phe-19–Gly-287 are extracellular. TNFR-Cys repeat units lie at residues Gln-68 to Cys-105 and Glu-106 to Cys-146. Intrachain disulfides connect Cys-69/Cys-81, Cys-84/Cys-97, Cys-87/Cys-105, Cys-107/Cys-121, and Cys-128/Cys-146. The tract at residues Lys-142–Ser-168 is disordered. Residues Pro-149–Pro-160 are compositionally biased toward low complexity. Residues Asn-156, Asn-183, and Asn-229 are each glycosylated (N-linked (GlcNAc...) asparagine). The disordered stretch occupies residues Glu-204–Ala-256. The span at Asp-242–Ala-256 shows a compositional bias: polar residues. Residues Pro-288–Cys-308 form a helical membrane-spanning segment. The Cytoplasmic segment spans residues Tyr-309–Lys-498. Residues Asp-338 to Ser-358 show a composition bias toward polar residues. Disordered stretches follow at residues Asp-338–Pro-370, Leu-389–Glu-411, and Glu-436–Lys-498. Residues Ser-339 and Ser-353 each carry the phosphoserine modification. 3 stretches are compositionally biased toward basic and acidic residues: residues Glu-402–Glu-411, Glu-456–Glu-465, and Glu-484–Lys-498.

Belongs to the TNFR8 family. In terms of assembly, interacts with TRAF1, TRAF2, TRAF3 and TRAF5. Detected in thymus and in activated splenocytes.

Its subcellular location is the cell membrane. Receptor for TNFSF8/CD30L. May play a role in the regulation of cellular growth and transformation of activated lymphoblasts. Regulates gene expression through activation of NF-kappa-B. This chain is Tumor necrosis factor receptor superfamily member 8, found in Mus musculus (Mouse).